The sequence spans 223 residues: UPF0441 protein YgiB (223 aa).

The span at 178 to 195 shows a compositional bias: low complexity; it reads TVPKTAMAPKPATTTTVT. The tract at residues 178–223 is disordered; the sequence is TVPKTAMAPKPATTTTVTRGGFGESIAKQSTMQRSATGTSSRSMGG. Positions 204-223 are enriched in polar residues; that stretch reads AKQSTMQRSATGTSSRSMGG.

This sequence belongs to the UPF0441 family.

The protein is UPF0441 protein YgiB of Shigella boydii serotype 4 (strain Sb227).